The following is a 264-amino-acid chain: MKSKLKLHGFNNLTKTLSFNIYDICYAETPEDQQAYVRYIDEEYDAQRLTQILTDVVDIIGANVLNIARQDYDPQGASVTILISEQPVEPTESQIEESPGPLPETILAHLDKSHITVHTYPEIHPVDGLATFRVDIDVSTCGVISPLKALNYLIHQFDSDIVTVDYRVRGFTRDVEGRKHFIDHEINSIQKYLSADTRAAYQMTDVNVYQENMFHTKMLLKDFDLDNYLFGDATLNLSVEQRKQVEKRLRHEMLEIFYARNMPH.

Catalysis depends on S113, which acts as the Schiff-base intermediate with substrate; via pyruvic acid. S113 bears the Pyruvic acid (Ser); by autocatalysis mark. H118 functions as the Proton acceptor; for processing activity in the catalytic mechanism. Residue C141 is the Proton donor; for catalytic activity of the active site.

Belongs to the prokaryotic AdoMetDC family. Type 2 subfamily. As to quaternary structure, heterooctamer of four alpha and four beta chains arranged as a tetramer of alpha/beta heterodimers. Pyruvate serves as cofactor. In terms of processing, is synthesized initially as an inactive proenzyme. Formation of the active enzyme involves a self-maturation process in which the active site pyruvoyl group is generated from an internal serine residue via an autocatalytic post-translational modification. Two non-identical subunits are generated from the proenzyme in this reaction, and the pyruvate is formed at the N-terminus of the alpha chain, which is derived from the carboxyl end of the proenzyme. The post-translation cleavage follows an unusual pathway, termed non-hydrolytic serinolysis, in which the side chain hydroxyl group of the serine supplies its oxygen atom to form the C-terminus of the beta chain, while the remainder of the serine residue undergoes an oxidative deamination to produce ammonia and the pyruvoyl group blocking the N-terminus of the alpha chain.

The catalysed reaction is S-adenosyl-L-methionine + H(+) = S-adenosyl 3-(methylsulfanyl)propylamine + CO2. The protein operates within amine and polyamine biosynthesis; S-adenosylmethioninamine biosynthesis; S-adenosylmethioninamine from S-adenosyl-L-methionine: step 1/1. In terms of biological role, catalyzes the decarboxylation of S-adenosylmethionine to S-adenosylmethioninamine (dcAdoMet), the propylamine donor required for the synthesis of the polyamines spermine and spermidine from the diamine putrescine. This Azotobacter vinelandii (strain DJ / ATCC BAA-1303) protein is S-adenosylmethionine decarboxylase proenzyme.